Reading from the N-terminus, the 257-residue chain is DNA repair protein RecO (257 aa).

Belongs to the RecO family.

Functionally, involved in DNA repair and RecF pathway recombination. The polypeptide is DNA repair protein RecO (Streptococcus thermophilus (strain CNRZ 1066)).